The following is an 887-amino-acid chain: MGNSNTKESRAGDGSSRAHHGDPGSASLQSDRVSSRRNRVSRGDLGGILGLGTGASQSEPPYERRETKQEREARRLERERVARIAERERSMKEEHVDGGYLVTMGTYTSPEDFNKPIVRQLQIERKVAPFWRGLNDFDDQWTEPQIIAAARGLPVPPADQIPPEDLIPRPLPANPRTEGSSNLDNLTIPITGRSPSTASEHASSNPGSALPSPVSAQAPRANSPFKPRGKAIAAVLGGGGSRNGSTTELMPREINLPHDPFVNGQPLEVFLYKNATECPICFLTFPPYLNHTRCCDQPICSECFVQIKRPDPHFPEGHNENDPNHNPEETAGLLVSEPACCPYCTQPDFGVTYEPPPFRRGLSYSISLTAVGAASAAMSSSSSVNSASLSPTNASPSNGTGRRRNQSVSASSPSVILTDRIRPEWATKLQAARAHLARRAAAATALHTAAFIVGGSENRAFRSRFGRRNNGGSGSALPSPGGVNHGEGENGDSGSGTPSQNDMDQNSRGDPGRGRSGGNHRDRLEDLEEMMLAEAVRLSLAAEEERKRKVSKEERKEAKKREKEERKAAKAAAKQVGPYEGASGRSGHSSASGSTLSLPGFGFGRKRGNSAASNLRIEASVASAIATTESPEANPKEKGKGVDRAVSTHAEGAPATATDPAVLGGSASTSSPRPVPHLPAGPSHLRQMSNASSVTSSILDSRHGSYTSPTHLQDPRSSGLSLGSRSGASEDGGDADRDRDPCASTEPMFNFRSLAQVVGVSLDGENAGRRLSLIEAERRARESGETGSQDSADFGEVETIKTDTATDHADVKPQAEASGSLSVDTAMGRHIKGSPIAQNGSGEVESDSLSPPTVTITLETPATASANDELKQLGSEAAVEPVHRLTE.

Disordered regions lie at residues 1–77 (MGNS…RRLE), 168–226 (PRPL…SPFK), 381–415 (SSSV…SPSV), 463–521 (SRFG…GNHR), 542–608 (AEEE…RKRG), 623–746 (SAIA…ASTE), and 778–854 (RRAR…PPTV). Gly residues predominate over residues 44 to 53 (DLGGILGLGT). Over residues 61–77 (PYERRETKQEREARRLE) the composition is skewed to basic and acidic residues. A compositionally biased stretch (polar residues) spans 193–207 (RSPSTASEHASSNPG). Residues 381–390 (SSSVNSASLS) show a composition bias toward low complexity. 2 stretches are compositionally biased toward polar residues: residues 391 to 415 (PTNA…SPSV) and 495 to 504 (SGTPSQNDMD). Basic and acidic residues-rich tracts occupy residues 505 to 521 (QNSR…GNHR) and 543 to 568 (EEER…ERKA). Over residues 581–600 (GASGRSGHSSASGSTLSLPG) the composition is skewed to low complexity. Residues 634 to 643 (NPKEKGKGVD) are compositionally biased toward basic and acidic residues. The span at 686–711 (RQMSNASSVTSSILDSRHGSYTSPTH) shows a compositional bias: polar residues. Residues 716-727 (RSSGLSLGSRSG) show a composition bias toward low complexity. Residues 798 to 813 (ETIKTDTATDHADVKP) are compositionally biased toward basic and acidic residues. Residues 836-854 (IAQNGSGEVESDSLSPPTV) show a composition bias toward polar residues.

The protein belongs to the SIP5 family.

The protein localises to the cytoplasm. Functionally, may negatively regulate the SNF1 kinase. The chain is Protein SIP5 (SIP5) from Chaetomium globosum (strain ATCC 6205 / CBS 148.51 / DSM 1962 / NBRC 6347 / NRRL 1970) (Soil fungus).